Here is a 368-residue protein sequence, read N- to C-terminus: 3-dehydroquinate synthase (368 aa).

Residues glycine 112–aspartate 116, threonine 136–threonine 137, lysine 149, lysine 158, and phenylalanine 176–threonine 179 each bind NAD(+). Glutamate 191, histidine 257, and histidine 274 together coordinate Zn(2+).

This sequence belongs to the sugar phosphate cyclases superfamily. Dehydroquinate synthase family. The cofactor is Co(2+). Requires Zn(2+) as cofactor. NAD(+) serves as cofactor.

Its subcellular location is the cytoplasm. It carries out the reaction 7-phospho-2-dehydro-3-deoxy-D-arabino-heptonate = 3-dehydroquinate + phosphate. It participates in metabolic intermediate biosynthesis; chorismate biosynthesis; chorismate from D-erythrose 4-phosphate and phosphoenolpyruvate: step 2/7. Functionally, catalyzes the conversion of 3-deoxy-D-arabino-heptulosonate 7-phosphate (DAHP) to dehydroquinate (DHQ). In Natranaerobius thermophilus (strain ATCC BAA-1301 / DSM 18059 / JW/NM-WN-LF), this protein is 3-dehydroquinate synthase.